The chain runs to 367 residues: MSESQTLVVKLGTSVLTGGSRRLNRAHIVELVRQCAQLHAMGHRIVIVTSGAIAAGREHLGYPELPATIASKQLLAAVGQSRLIQLWEQLFSIYGIHVGQMLLTRADMEDRERFLNARDTLRALLDNSIVPVINENDAVATAEIKVGDNDNLSALAAILAGADKLLLLTDQPGLFTADPRSNPQAELIKDVYGIDDALRAIAGDSVSGLGTGGMGTKLQAADVACRAGIDTIIAAGNRPDVIGHAMAGLPVGTCFHAQESPLENRKRWIFGAPPAGEITVDAGATQAILERGSSLLPKGIKIVSGNFSRGEVIRIRNSEGRDIAHGVSRYNSDALRLIAGQHSQQIDAILGYEYGPVAVHRDDMIIR.

K10 is a binding site for ATP. Substrate contacts are provided by S50, D137, and N149. Residues 169-170 (TD) and 211-217 (TGGMGTK) each bind ATP. A PUA domain is found at 275 to 353 (AGEITVDAGA…QQIDAILGYE (79 aa)).

It belongs to the glutamate 5-kinase family.

The protein resides in the cytoplasm. It catalyses the reaction L-glutamate + ATP = L-glutamyl 5-phosphate + ADP. It functions in the pathway amino-acid biosynthesis; L-proline biosynthesis; L-glutamate 5-semialdehyde from L-glutamate: step 1/2. Catalyzes the transfer of a phosphate group to glutamate to form L-glutamate 5-phosphate. The chain is Glutamate 5-kinase from Klebsiella pneumoniae subsp. pneumoniae (strain ATCC 700721 / MGH 78578).